The primary structure comprises 72 residues: Translation initiation factor IF-1 (72 aa).

Positions Ala2–Lys72 constitute an S1-like domain.

It belongs to the IF-1 family. Component of the 30S ribosomal translation pre-initiation complex which assembles on the 30S ribosome in the order IF-2 and IF-3, IF-1 and N-formylmethionyl-tRNA(fMet); mRNA recruitment can occur at any time during PIC assembly.

The protein localises to the cytoplasm. Its function is as follows. One of the essential components for the initiation of protein synthesis. Stabilizes the binding of IF-2 and IF-3 on the 30S subunit to which N-formylmethionyl-tRNA(fMet) subsequently binds. Helps modulate mRNA selection, yielding the 30S pre-initiation complex (PIC). Upon addition of the 50S ribosomal subunit IF-1, IF-2 and IF-3 are released leaving the mature 70S translation initiation complex. This Lactococcus lactis subsp. lactis (strain IL1403) (Streptococcus lactis) protein is Translation initiation factor IF-1.